Consider the following 241-residue polypeptide: Beta-nerve growth factor (241 aa).

A signal peptide spans 1–18; the sequence is MSMLFYTLITAFLIGIQA. The propeptide occupies 19-121; it reads EPHSESNVPA…PFNRTHRSKR (103 aa). N-linked (GlcNAc...) asparagine glycans are attached at residues Asn69 and Asn114. 3 disulfide bridges follow: Cys136–Cys201, Cys179–Cys229, and Cys189–Cys231. A 1-acyl-sn-glycero-3-phospho-(1D-myo-inositol) is bound by residues Tyr173 and Lys209. A 1-acyl-sn-glycero-3-phospho-L-serine is bound at residue Lys209.

It belongs to the NGF-beta family. In terms of assembly, homodimer. The homodimer interacts with a single NTRK1 chain. The homodimer interacts with a single NGFR chain. The NGF dimer interacts with a single SORCS2 chain (via extracellular domain). The NGF precursor (proNGF) binds to a receptor complex formed by SORT1 and NGFR, which leads to NGF endocytosis. Both mature NGF and the immature NGF precursor (proNGF) interact with SORCS2 and with the heterodimer formed by SORCS2 and NGFR (via extracellular domains). The NGF precursor (proNGF) has much higher affinity for SORCS2 than mature NGF. The NGF precursor (proNGF) has much higher affinity for SORT1 than mature NGF. Interacts with ADAM10 in a divalent cation-dependent manner. Interaction with SORCS3.

The protein resides in the secreted. Its subcellular location is the endosome lumen. Functionally, nerve growth factor is important for the development and maintenance of the sympathetic and sensory nervous systems. Extracellular ligand for the NTRK1 and NGFR receptors, activates cellular signaling cascades to regulate neuronal proliferation, differentiation and survival. The immature NGF precursor (proNGF) functions as a ligand for the heterodimeric receptor formed by SORCS2 and NGFR, and activates cellular signaling cascades that lead to inactivation of RAC1 and/or RAC2, reorganization of the actin cytoskeleton and neuronal growth cone collapse. In contrast to mature NGF, the precursor form (proNGF) promotes neuronal apoptosis (in vitro). Inhibits metalloproteinase-dependent proteolysis of platelet glycoprotein VI. Binds lysophosphatidylinositol and lysophosphatidylserine between the two chains of the homodimer. The lipid-bound form promotes histamine relase from mast cells, contrary to the lipid-free form. In Homo sapiens (Human), this protein is Beta-nerve growth factor (NGF).